Here is a 528-residue protein sequence, read N- to C-terminus: Sensory rhodopsin I transducer (528 aa).

2 helical membrane passes run 11 to 31 and 35 to 55; these read GAKL…VGVV and VAST…INAA. 2 consecutive HAMP domains span residues 55–107 and 142–195; these read AETV…DRLS and TAYQ…ETIE. Residues 214 to 455 enclose the Methyl-accepting transducer domain; that stretch reads TSRRVQQEVD…ATADSIADVT (242 aa). Glutamate methyl ester (Glu) is present on E259.

Belongs to the methyl-accepting chemotaxis (MCP) protein family. As to quaternary structure, interacts with Sop1.

It is found in the cell membrane. Functionally, transduces signals from the phototaxis receptor sensory rhodopsin I (Sop1). This Haloarcula marismortui (strain ATCC 43049 / DSM 3752 / JCM 8966 / VKM B-1809) (Halobacterium marismortui) protein is Sensory rhodopsin I transducer (htr1).